Here is a 570-residue protein sequence, read N- to C-terminus: Alpha-glucosidase (570 aa).

The active-site Nucleophile is the Asp206. Glu263 serves as the catalytic Proton donor.

This sequence belongs to the glycosyl hydrolase 13 family.

The catalysed reaction is Hydrolysis of terminal, non-reducing (1-&gt;4)-linked alpha-D-glucose residues with release of alpha-D-glucose.. This is Alpha-glucosidase (MAL2) from Candida albicans (Yeast).